Reading from the N-terminus, the 233-residue chain is Purine nucleoside phosphorylase DeoD-type (233 aa).

H4 is a binding site for a purine D-ribonucleoside. Phosphate is bound by residues G20, R24, R43, and 87 to 90; that span reads RIGT. Residues 179–181 and 203–204 contribute to the a purine D-ribonucleoside site; these read EME and SD. The Proton donor role is filled by D204.

The protein belongs to the PNP/UDP phosphorylase family. As to quaternary structure, homohexamer; trimer of homodimers.

It carries out the reaction a purine D-ribonucleoside + phosphate = a purine nucleobase + alpha-D-ribose 1-phosphate. The enzyme catalyses a purine 2'-deoxy-D-ribonucleoside + phosphate = a purine nucleobase + 2-deoxy-alpha-D-ribose 1-phosphate. Its function is as follows. Catalyzes the reversible phosphorolytic breakdown of the N-glycosidic bond in the beta-(deoxy)ribonucleoside molecules, with the formation of the corresponding free purine bases and pentose-1-phosphate. This is Purine nucleoside phosphorylase DeoD-type from Helicobacter pylori (strain ATCC 700392 / 26695) (Campylobacter pylori).